The primary structure comprises 485 residues: Amyloid beta A4 precursor protein-binding family B member 1-interacting protein (485 aa).

Over residues 84 to 107 the composition is skewed to polar residues; the sequence is QAQKTSGNQQSVVTQPSTGTNNDF. Residues 84-157 are disordered; the sequence is QAQKTSGNQQ…LSQEEQEARA (74 aa). The segment covering 125–147 has biased composition (pro residues); the sequence is LPPPPPAPDLDLPPPPPPPPPEP. The region spanning 175 to 262 is the Ras-associating domain; it reads KKLVVKVHMY…KVLFLEKKEK (88 aa). The region spanning 305 to 414 is the PH domain; that stretch reads VPELEGALYL…WVTGIRIAKY (110 aa).

Belongs to the MRL family.

It is found in the cell membrane. The protein resides in the cytoplasm. The protein localises to the cytoskeleton. Appears to function in the signal transduction from Ras activation to actin cytoskeletal remodeling. The chain is Amyloid beta A4 precursor protein-binding family B member 1-interacting protein (APBB1IP) from Gallus gallus (Chicken).